Here is a 119-residue protein sequence, read N- to C-terminus: MRHRKSGVKLGRTGSHRKAMFQNMTNSLFEHELIKTTLPKAKELRRVAEPLITMAKEDSVANRRLAFSRMRSKAMVGKLFGTLGPRYQARPGGYLRIVKCGYRDGDNAPMAYVELVDRD.

This sequence belongs to the bacterial ribosomal protein bL17 family. In terms of assembly, part of the 50S ribosomal subunit. Contacts protein L32.

This chain is Large ribosomal subunit protein bL17, found in Psychrobacter arcticus (strain DSM 17307 / VKM B-2377 / 273-4).